A 414-amino-acid chain; its full sequence is MSEYIRVTEDENDEPIEIPSEDDGTVLLSTVTAQFPGACGLRYRNPVSQCMRGVRLVEGILHAPDAGWGNLVYVVNYPKDNKRKMDETDASSAVKVKRAVQKTSDLIVLGLPWKTTEQDLKEYFSTFGEVLMVQVKKDLKTGHSKGFGFVRFTEYETQVKVMSQRHMIDGRWCDCKLPNSKQSQDEPLRSRKVFVGRCTEDMTEDELREFFSQYGDVMDVFIPKPFRAFAFVTFADDQIAQSLCGEDLIIKGISVHISNAEPKHNSNRQLERSGRFGGNPGGFGNQGGFGNSRGGGAGLGNNQGSNMGGGMNFGAFSINPAMMAAAQAALQSSWGMMGMLASQQNQSGPSGNNQNQGNMQREPNQAFGSGNNSYSGSNSGAAIGWGSASNAGSGSGFNGGFGSSMDSKSSGWGM.

Residues Lys79, Lys84, Lys95, Lys102, and Lys181 each participate in a glycyl lysine isopeptide (Lys-Gly) (interchain with G-Cter in SUMO2) cross-link. Positions 82–98 match the Nuclear localization signal motif; it reads KRKMDETDASSAVKVKR. RRM domains follow at residues 104-200 and 191-262; these read SDLI…RCTE and RKVF…NAEP. Phosphoserine is present on Ser183. The interaction with UBQLN2 stretch occupies residues 216-414; it reads DVMDVFIPKP…MDSKSSGWGM (199 aa). The short motif at 239–250 is the Nuclear export signal element; it reads IAQSLCGEDLII. A compositionally biased stretch (basic and acidic residues) spans 261–274; that stretch reads EPKHNSNRQLERSG. 2 disordered regions span residues 261–303 and 341–373; these read EPKH…GNNQ and ASQQNQSGPSGNNQNQGNMQREPNQAFGSGNNS. A Glycyl lysine isopeptide (Lys-Gly) (interchain with G-Cter in SUMO2) cross-link involves residue Lys263. Over residues 275 to 303 the composition is skewed to gly residues; sequence RFGGNPGGFGNQGGFGNSRGGGAGLGNNQ. Position 292 is a phosphoserine (Ser292). The residue at position 293 (Arg293) is an Omega-N-methylarginine. Residues 342 to 358 are compositionally biased toward low complexity; the sequence is SQQNQSGPSGNNQNQGN.

In terms of assembly, homodimer. Homooligomer (via its N-terminal domain). Interacts with BRDT. Binds specifically to pyrimidine-rich motifs of TAR DNA and to single stranded TG repeated sequences. Binds to RNA, specifically to UG repeated sequences with a minimum of six contiguous repeats. Interacts with ATXN2; the interaction is RNA-dependent. Interacts with MATR3. Interacts with UBQLN2. Interacts with HNRNPA2B1. Interacts with ZNF106. Interacts with CNOT7/CAF1. Interacts with CRY2. Interacts with PPIA/CYPA; the interaction is dependent on RNA-binding activity of TARDBP and PPIase activity of PPIA/CYPA and acetylation of PPIA/CYPA at 'Lys-125' favors the interaction. Post-translationally, hyperphosphorylated in hippocampus, neocortex, and spinal cord from individuals affected with ALS and FTLDU. Phosphorylated upon cellular stress. Ubiquitinated in hippocampus, neocortex, and spinal cord from individuals affected with ALS and FTLDU. In terms of processing, cleaved to generate C-terminal fragments in hippocampus, neocortex, and spinal cord from individuals affected with ALS and FTLDU. In terms of tissue distribution, ubiquitously expressed. In particular, expression is high in pancreas, placenta, lung, genital tract and spleen.

The protein resides in the nucleus. Its subcellular location is the cytoplasm. It is found in the stress granule. It localises to the mitochondrion. Functionally, RNA-binding protein that is involved in various steps of RNA biogenesis and processing. Preferentially binds, via its two RNA recognition motifs RRM1 and RRM2, to GU-repeats on RNA molecules predominantly localized within long introns and in the 3'UTR of mRNAs. In turn, regulates the splicing of many non-coding and protein-coding RNAs including proteins involved in neuronal survival, as well as mRNAs that encode proteins relevant for neurodegenerative diseases. Plays a role in maintaining mitochondrial homeostasis by regulating the processing of mitochondrial transcripts. Also regulates mRNA stability by recruiting CNOT7/CAF1 deadenylase on mRNA 3'UTR leading to poly(A) tail deadenylation and thus shortening. In response to oxidative insult, associates with stalled ribosomes localized to stress granules (SGs) and contributes to cell survival. Also participates in the normal skeletal muscle formation and regeneration, forming cytoplasmic myo-granules and binding mRNAs that encode sarcomeric proteins. Plays a role in the maintenance of the circadian clock periodicity via stabilization of the CRY1 and CRY2 proteins in a FBXL3-dependent manner. Negatively regulates the expression of CDK6. Regulates the expression of HDAC6, ATG7 and VCP in a PPIA/CYPA-dependent manner. In Homo sapiens (Human), this protein is TAR DNA-binding protein 43.